Reading from the N-terminus, the 513-residue chain is Coniferin beta-glucosidase (513 aa).

The N-terminal stretch at 1–23 (MEVSVLMWVLLFYSLLGFQVTTA) is a signal peptide. Residues Gln44, His145, and 190–191 (NE) contribute to the a beta-D-glucoside site. Residue Glu191 is the Proton donor of the active site. A disulfide bridge links Cys210 with Cys219. An N-linked (GlcNAc...) asparagine glycan is attached at Asn223. Tyr336 and Glu408 together coordinate a beta-D-glucoside. Residue Glu408 is the Nucleophile of the active site. Asn447 carries N-linked (GlcNAc...) asparagine glycosylation. Residues Trp457, 464 to 465 (EW), and Phe473 each bind a beta-D-glucoside.

It belongs to the glycosyl hydrolase 1 family. Homodimer. Post-translationally, glycosylated.

It catalyses the reaction 4-O-(beta-D-glucosyl)-(E)-coniferol + H2O = (E)-coniferol + D-glucose. Its activity is regulated as follows. Inhibited by glucono-1,5-lactone, but not by bromoconduritol or conduritol B epoxide. In terms of biological role, involved in the release of monolignols for lignin biosynthesis. Unable to hydrolyze 4-nitrophenyl beta-cellobioside or alpha-linked methylumbelliferyl glucoside. This Pinus contorta (Shore pine) protein is Coniferin beta-glucosidase.